Reading from the N-terminus, the 92-residue chain is Small ribosomal subunit protein uS19 (92 aa).

It belongs to the universal ribosomal protein uS19 family.

Its function is as follows. Protein S19 forms a complex with S13 that binds strongly to the 16S ribosomal RNA. The polypeptide is Small ribosomal subunit protein uS19 (Wigglesworthia glossinidia brevipalpis).